The sequence spans 207 residues: Large ribosomal subunit protein uL4 (207 aa).

Residues 44–71 (RRQGTQSAKTRAEVRGGGRKPWKQKGTG) are disordered. Over residues 60-71 (GGRKPWKQKGTG) the composition is skewed to basic residues.

This sequence belongs to the universal ribosomal protein uL4 family. Part of the 50S ribosomal subunit.

Functionally, one of the primary rRNA binding proteins, this protein initially binds near the 5'-end of the 23S rRNA. It is important during the early stages of 50S assembly. It makes multiple contacts with different domains of the 23S rRNA in the assembled 50S subunit and ribosome. In terms of biological role, forms part of the polypeptide exit tunnel. The chain is Large ribosomal subunit protein uL4 from Alkaliphilus oremlandii (strain OhILAs) (Clostridium oremlandii (strain OhILAs)).